The sequence spans 359 residues: Holliday junction branch migration complex subunit RuvB (359 aa).

Over residues 1-10 (MPEHDPHQEN) the composition is skewed to basic and acidic residues. Residues 1-20 (MPEHDPHQENRTVSSVRLED) form a disordered region. The interval 4 to 188 (HDPHQENRTV…FGIPLRLIFY (185 aa)) is large ATPase domain (RuvB-L). ATP contacts are provided by residues leucine 27, arginine 28, glycine 69, lysine 72, threonine 73, threonine 74, 135–137 (EDF), arginine 178, tyrosine 188, and arginine 225. Position 73 (threonine 73) interacts with Mg(2+). Residues 189 to 259 (TASELELIVS…TADAALQRLE (71 aa)) form a small ATPAse domain (RuvB-S) region. A head domain (RuvB-H) region spans residues 262–359 (SLGLDAMDRR…LLHRDGSADE (98 aa)). DNA contacts are provided by arginine 298, arginine 317, and arginine 322.

The protein belongs to the RuvB family. In terms of assembly, homohexamer. Forms an RuvA(8)-RuvB(12)-Holliday junction (HJ) complex. HJ DNA is sandwiched between 2 RuvA tetramers; dsDNA enters through RuvA and exits via RuvB. An RuvB hexamer assembles on each DNA strand where it exits the tetramer. Each RuvB hexamer is contacted by two RuvA subunits (via domain III) on 2 adjacent RuvB subunits; this complex drives branch migration. In the full resolvosome a probable DNA-RuvA(4)-RuvB(12)-RuvC(2) complex forms which resolves the HJ.

The protein resides in the cytoplasm. It carries out the reaction ATP + H2O = ADP + phosphate + H(+). The RuvA-RuvB-RuvC complex processes Holliday junction (HJ) DNA during genetic recombination and DNA repair, while the RuvA-RuvB complex plays an important role in the rescue of blocked DNA replication forks via replication fork reversal (RFR). RuvA specifically binds to HJ cruciform DNA, conferring on it an open structure. The RuvB hexamer acts as an ATP-dependent pump, pulling dsDNA into and through the RuvAB complex. RuvB forms 2 homohexamers on either side of HJ DNA bound by 1 or 2 RuvA tetramers; 4 subunits per hexamer contact DNA at a time. Coordinated motions by a converter formed by DNA-disengaged RuvB subunits stimulates ATP hydrolysis and nucleotide exchange. Immobilization of the converter enables RuvB to convert the ATP-contained energy into a lever motion, pulling 2 nucleotides of DNA out of the RuvA tetramer per ATP hydrolyzed, thus driving DNA branch migration. The RuvB motors rotate together with the DNA substrate, which together with the progressing nucleotide cycle form the mechanistic basis for DNA recombination by continuous HJ branch migration. Branch migration allows RuvC to scan DNA until it finds its consensus sequence, where it cleaves and resolves cruciform DNA. The protein is Holliday junction branch migration complex subunit RuvB of Granulibacter bethesdensis (strain ATCC BAA-1260 / CGDNIH1).